Consider the following 151-residue polypeptide: Protein INO4 (151 aa).

In terms of domain architecture, bHLH spans 45–97; it reads QIRINHVSSEKKRRELERAIFDELVAVVPDLQPQESRSELIIYLKSLSYLSWL. Positions 112-137 are disordered; it reads HEAKTGSSSSSDPVQEQNGNIRDLVP. The segment covering 116-131 has biased composition (polar residues); the sequence is TGSSSSSDPVQEQNGN.

Efficient DNA binding requires dimerization with another bHLH protein.

Its subcellular location is the nucleus. Functionally, transcriptional activator of phospholipid synthetic genes (such as INO1, CHO1/PSS, CHO2/PEM1, OPI3/PEM2, etc.). The polypeptide is Protein INO4 (INO4) (Saccharomyces cerevisiae (strain ATCC 204508 / S288c) (Baker's yeast)).